A 428-amino-acid chain; its full sequence is 3-phosphoshikimate 1-carboxyvinyltransferase (428 aa).

Positions 21, 22, and 26 each coordinate 3-phosphoshikimate. A phosphoenolpyruvate-binding site is contributed by K21. Phosphoenolpyruvate is bound by residues G91 and R119. Positions 164, 166, 313, and 340 each coordinate 3-phosphoshikimate. Position 166 (Q166) interacts with phosphoenolpyruvate. D313 acts as the Proton acceptor in catalysis. R344 and R386 together coordinate phosphoenolpyruvate.

This sequence belongs to the EPSP synthase family. In terms of assembly, monomer.

Its subcellular location is the cytoplasm. It catalyses the reaction 3-phosphoshikimate + phosphoenolpyruvate = 5-O-(1-carboxyvinyl)-3-phosphoshikimate + phosphate. It functions in the pathway metabolic intermediate biosynthesis; chorismate biosynthesis; chorismate from D-erythrose 4-phosphate and phosphoenolpyruvate: step 6/7. In terms of biological role, catalyzes the transfer of the enolpyruvyl moiety of phosphoenolpyruvate (PEP) to the 5-hydroxyl of shikimate-3-phosphate (S3P) to produce enolpyruvyl shikimate-3-phosphate and inorganic phosphate. The polypeptide is 3-phosphoshikimate 1-carboxyvinyltransferase (Campylobacter jejuni subsp. jejuni serotype O:23/36 (strain 81-176)).